A 192-amino-acid polypeptide reads, in one-letter code: uncharacterized protein (192 aa).

A Nudix hydrolase domain is found at 29 to 160 (RRQAAVLIPL…PLDIQRRGHD (132 aa)). A Nudix box motif is present at residues 67–89 (GAVDSTDASLIAAALREAHEEVA). The Mg(2+) site is built by E83 and E87.

This sequence belongs to the Nudix hydrolase family. PCD1 subfamily. Mn(2+) is required as a cofactor. Requires Mg(2+) as cofactor.

Its function is as follows. Probably mediates the hydrolysis of some nucleoside diphosphate derivatives. This is an uncharacterized protein from Enterobacter sp. (strain 638).